The following is a 218-amino-acid chain: Thiamine-phosphate synthase (218 aa).

4-amino-2-methyl-5-(diphosphooxymethyl)pyrimidine is bound by residues 43-47 and Asn78; that span reads QFRDK. The Mg(2+) site is built by Asp79 and Asp98. Ser117 serves as a coordination point for 4-amino-2-methyl-5-(diphosphooxymethyl)pyrimidine. 143-145 contacts 2-[(2R,5Z)-2-carboxy-4-methylthiazol-5(2H)-ylidene]ethyl phosphate; sequence TNS. Lys146 contributes to the 4-amino-2-methyl-5-(diphosphooxymethyl)pyrimidine binding site. 2-[(2R,5Z)-2-carboxy-4-methylthiazol-5(2H)-ylidene]ethyl phosphate-binding positions include Gly174 and 194 to 195; that span reads IS.

The protein belongs to the thiamine-phosphate synthase family. Mg(2+) serves as cofactor.

It catalyses the reaction 2-[(2R,5Z)-2-carboxy-4-methylthiazol-5(2H)-ylidene]ethyl phosphate + 4-amino-2-methyl-5-(diphosphooxymethyl)pyrimidine + 2 H(+) = thiamine phosphate + CO2 + diphosphate. It carries out the reaction 2-(2-carboxy-4-methylthiazol-5-yl)ethyl phosphate + 4-amino-2-methyl-5-(diphosphooxymethyl)pyrimidine + 2 H(+) = thiamine phosphate + CO2 + diphosphate. The enzyme catalyses 4-methyl-5-(2-phosphooxyethyl)-thiazole + 4-amino-2-methyl-5-(diphosphooxymethyl)pyrimidine + H(+) = thiamine phosphate + diphosphate. It functions in the pathway cofactor biosynthesis; thiamine diphosphate biosynthesis; thiamine phosphate from 4-amino-2-methyl-5-diphosphomethylpyrimidine and 4-methyl-5-(2-phosphoethyl)-thiazole: step 1/1. Functionally, condenses 4-methyl-5-(beta-hydroxyethyl)thiazole monophosphate (THZ-P) and 2-methyl-4-amino-5-hydroxymethyl pyrimidine pyrophosphate (HMP-PP) to form thiamine monophosphate (TMP). This Lactococcus lactis subsp. cremoris (strain MG1363) protein is Thiamine-phosphate synthase.